The chain runs to 184 residues: Ribosome-recycling factor (184 aa).

The protein belongs to the RRF family.

Its subcellular location is the cytoplasm. Its function is as follows. Responsible for the release of ribosomes from messenger RNA at the termination of protein biosynthesis. May increase the efficiency of translation by recycling ribosomes from one round of translation to another. In Psychrobacter arcticus (strain DSM 17307 / VKM B-2377 / 273-4), this protein is Ribosome-recycling factor.